The primary structure comprises 293 residues: Probable porphobilinogen deaminase (293 aa).

Cysteine 233 is subject to S-(dipyrrolylmethanemethyl)cysteine.

It belongs to the HMBS family. Requires dipyrromethane as cofactor.

It carries out the reaction 4 porphobilinogen + H2O = hydroxymethylbilane + 4 NH4(+). The protein operates within porphyrin-containing compound metabolism; protoporphyrin-IX biosynthesis; coproporphyrinogen-III from 5-aminolevulinate: step 2/4. Its function is as follows. Tetrapolymerization of the monopyrrole PBG into the hydroxymethylbilane pre-uroporphyrinogen in several discrete steps. The sequence is that of Probable porphobilinogen deaminase from Saccharolobus islandicus (strain Y.G.57.14 / Yellowstone #1) (Sulfolobus islandicus).